A 241-amino-acid polypeptide reads, in one-letter code: GDSL esterase/lipase At5g45920 (241 aa).

The active-site Nucleophile is the Ser-12. Residues Asp-189 and His-192 contribute to the active site.

It belongs to the 'GDSL' lipolytic enzyme family.

In Arabidopsis thaliana (Mouse-ear cress), this protein is GDSL esterase/lipase At5g45920.